Here is a 295-residue protein sequence, read N- to C-terminus: Pyridoxal 5'-phosphate synthase subunit PdxS (295 aa).

A D-ribose 5-phosphate-binding site is contributed by Asp25. The active-site Schiff-base intermediate with D-ribose 5-phosphate is the Lys82. Gly154 is a D-ribose 5-phosphate binding site. Arg166 is a D-glyceraldehyde 3-phosphate binding site. D-ribose 5-phosphate contacts are provided by residues Gly215 and 236 to 237 (GS).

This sequence belongs to the PdxS/SNZ family. As to quaternary structure, in the presence of PdxT, forms a dodecamer of heterodimers.

The enzyme catalyses aldehydo-D-ribose 5-phosphate + D-glyceraldehyde 3-phosphate + L-glutamine = pyridoxal 5'-phosphate + L-glutamate + phosphate + 3 H2O + H(+). It participates in cofactor biosynthesis; pyridoxal 5'-phosphate biosynthesis. Its function is as follows. Catalyzes the formation of pyridoxal 5'-phosphate from ribose 5-phosphate (RBP), glyceraldehyde 3-phosphate (G3P) and ammonia. The ammonia is provided by the PdxT subunit. Can also use ribulose 5-phosphate and dihydroxyacetone phosphate as substrates, resulting from enzyme-catalyzed isomerization of RBP and G3P, respectively. This is Pyridoxal 5'-phosphate synthase subunit PdxS from Bacillus cereus (strain 03BB102).